A 340-amino-acid chain; its full sequence is MGEMEQLKQEAEQLKKQIADARKACADITLAELVSGLEVVGRVQMRTRRTLRGHLAKIYAMHWATDSKLLVSASQDGKLIVWDTYTTNKVHAIPLRSSWVMTCAYAPSGNFVACGGLDNMCSIYSLKSREGNVKVSRELSAHTGYLSCCRFLDDNNIVTSSGDTTCALWDIETGQQKTVFVGHTGDCMSLAVSPDYKLFISGACDASAKLWDVREGTCRQTFTGHESDINAICFFPNGEAICTGSDDASCRLFDLRADQELTAYSHESIICGITSVAFSLSGRLLFAGYDDFNCNVWDSLKCERVGVLSGHDNRVSCLGVTADGMAVATGSWDSFLKIWN.

WD repeat units follow at residues 53–83 (GHLAKIYAMHWATDSKLLVSASQDGKLIVWD), 95–125 (LRSSWVMTCAYAPSGNFVACGGLDNMCSIYS), 141–170 (AHTGYLSCCRFLDDNNIVTSSGDTTCALWD), 182–212 (GHTGDCMSLAVSPDYKLFISGACDASAKLWD), 224–254 (GHESDINAICFFPNGEAICTGSDDASCRLFD), 268–298 (SIICGITSVAFSLSGRLLFAGYDDFNCNVWD), and 310–340 (GHDNRVSCLGVTADGMAVATGSWDSFLKIWN).

It belongs to the WD repeat G protein beta family. In terms of assembly, g proteins are composed of 3 units, alpha, beta and gamma. Interacts with RASD2. As to expression, expressed at a high level in the heart and at a much lower level in the brain.

Functionally, guanine nucleotide-binding proteins (G proteins) are involved as a modulator or transducer in various transmembrane signaling systems. The beta and gamma chains are required for the GTPase activity, for replacement of GDP by GTP, and for G protein-effector interaction. The sequence is that of Guanine nucleotide-binding protein G(I)/G(S)/G(T) subunit beta-3 (Gnb3) from Rattus norvegicus (Rat).